The sequence spans 260 residues: Imidazole glycerol phosphate synthase subunit HisF (260 aa).

Active-site residues include Asp11 and Asp130.

The protein belongs to the HisA/HisF family. In terms of assembly, heterodimer of HisH and HisF.

The protein localises to the cytoplasm. It carries out the reaction 5-[(5-phospho-1-deoxy-D-ribulos-1-ylimino)methylamino]-1-(5-phospho-beta-D-ribosyl)imidazole-4-carboxamide + L-glutamine = D-erythro-1-(imidazol-4-yl)glycerol 3-phosphate + 5-amino-1-(5-phospho-beta-D-ribosyl)imidazole-4-carboxamide + L-glutamate + H(+). Its pathway is amino-acid biosynthesis; L-histidine biosynthesis; L-histidine from 5-phospho-alpha-D-ribose 1-diphosphate: step 5/9. IGPS catalyzes the conversion of PRFAR and glutamine to IGP, AICAR and glutamate. The HisF subunit catalyzes the cyclization activity that produces IGP and AICAR from PRFAR using the ammonia provided by the HisH subunit. The protein is Imidazole glycerol phosphate synthase subunit HisF of Thermomicrobium roseum (strain ATCC 27502 / DSM 5159 / P-2).